We begin with the raw amino-acid sequence, 130 residues long: Fluoride-specific ion channel FluC (130 aa).

Transmembrane regions (helical) follow at residues 7–27 (VLAICIGASLGALARWRLGLW), 36–56 (LGTLAANLIGGYLIGICVAVF), 69–89 (ALITGFLGGLTTFSSFSAEVV), and 99–119 (LGFGTAGLHLFGSLLLTLAGI). Na(+) is bound by residues Gly-76 and Thr-79.

It belongs to the fluoride channel Fluc/FEX (TC 1.A.43) family.

It is found in the cell inner membrane. The catalysed reaction is fluoride(in) = fluoride(out). Na(+) is not transported, but it plays an essential structural role and its presence is essential for fluoride channel function. Functionally, fluoride-specific ion channel. Important for reducing fluoride concentration in the cell, thus reducing its toxicity. In Albidiferax ferrireducens (strain ATCC BAA-621 / DSM 15236 / T118) (Rhodoferax ferrireducens), this protein is Fluoride-specific ion channel FluC.